Here is a 320-residue protein sequence, read N- to C-terminus: ATP-dependent 6-phosphofructokinase (320 aa).

G12 contacts ATP. Position 22–26 (22–26 (RGVVR)) interacts with ADP. Residues 73–74 (RF) and 103–106 (GDGS) each bind ATP. Residue D104 coordinates Mg(2+). Substrate is bound at residue 126–128 (TID). Residue D128 is the Proton acceptor of the active site. Position 155 (R155) interacts with ADP. Substrate is bound by residues R163 and 170 to 172 (MGR). ADP contacts are provided by residues 186–188 (GCE), K212, and 214–216 (KKH). Substrate is bound by residues E223, R244, and 250–253 (HIQR).

Belongs to the phosphofructokinase type A (PFKA) family. ATP-dependent PFK group I subfamily. Prokaryotic clade 'B1' sub-subfamily. Homotetramer. Requires Mg(2+) as cofactor.

The protein resides in the cytoplasm. The catalysed reaction is beta-D-fructose 6-phosphate + ATP = beta-D-fructose 1,6-bisphosphate + ADP + H(+). Its pathway is carbohydrate degradation; glycolysis; D-glyceraldehyde 3-phosphate and glycerone phosphate from D-glucose: step 3/4. With respect to regulation, allosterically activated by ADP and other diphosphonucleosides, and allosterically inhibited by phosphoenolpyruvate. In terms of biological role, catalyzes the phosphorylation of D-fructose 6-phosphate to fructose 1,6-bisphosphate by ATP, the first committing step of glycolysis. This Aliivibrio fischeri (strain ATCC 700601 / ES114) (Vibrio fischeri) protein is ATP-dependent 6-phosphofructokinase.